Reading from the N-terminus, the 233-residue chain is 7-cyano-7-deazaguanine synthase (233 aa).

Position 11–21 (11–21 (LSGGLDSSTVL)) interacts with ATP. Zn(2+) contacts are provided by C195, C203, C206, and C209.

This sequence belongs to the QueC family. The cofactor is Zn(2+).

The enzyme catalyses 7-carboxy-7-deazaguanine + NH4(+) + ATP = 7-cyano-7-deazaguanine + ADP + phosphate + H2O + H(+). It functions in the pathway purine metabolism; 7-cyano-7-deazaguanine biosynthesis. Functionally, catalyzes the ATP-dependent conversion of 7-carboxy-7-deazaguanine (CDG) to 7-cyano-7-deazaguanine (preQ(0)). The protein is 7-cyano-7-deazaguanine synthase of Thermosynechococcus vestitus (strain NIES-2133 / IAM M-273 / BP-1).